A 153-amino-acid polypeptide reads, in one-letter code: Arachidonate 5-lipoxygenase-activating protein (153 aa).

The Lumenal segment spans residues 1–8 (MDQEAMGN). The chain crosses the membrane as a helical span at residues 9-30 (IVLLAIVTLISVVQNAFFAHKV). Residues 31 to 52 (EHESKTHNGRSFQRTGTPAFER) lie on the Cytoplasmic side of the membrane. The chain crosses the membrane as a helical span at residues 53-77 (VYTANQNCVDAYPTFLVVLWSAGLF). Topologically, residues 78 to 80 (CSQ) are lumenal. Residues 81–102 (VPAAFAGLMYLFVRQKYFVGYL) traverse the membrane as a helical segment. Over 103 to 107 (GERTQ) the chain is Cytoplasmic. An intramembrane segment occupies 108–115 (STPGYIFG). A helical transmembrane segment spans residues 116 to 128 (KRIILFLFLMSLA). At 129-153 (GIFNYFLILFFGSDFENYIKTITTT) the chain is on the lumenal side.

It belongs to the MAPEG family. Homotrimer. Interacts with LTC4S and ALOX5.

The protein resides in the nucleus membrane. Its subcellular location is the endoplasmic reticulum membrane. Required for leukotriene biosynthesis by ALOX5 (5-lipoxygenase). Anchors ALOX5 to the membrane. Binds arachidonic acid, and could play an essential role in the transfer of arachidonic acid to ALOX5. Binds to MK-886, a compound that blocks the biosynthesis of leukotrienes. This is Arachidonate 5-lipoxygenase-activating protein (ALOX5AP) from Sus scrofa (Pig).